Consider the following 269-residue polypeptide: Pertussis toxin subunit 1 homolog (269 aa).

The N-terminal stretch at 1–34 (MRCTRAIRQTARTGWLTWLAILAVTAPVTSPAWA) is a signal peptide.

The protein belongs to the bacterial exotoxin subunit A family.

The polypeptide is Pertussis toxin subunit 1 homolog (ptxA) (Bordetella bronchiseptica (strain ATCC BAA-588 / NCTC 13252 / RB50) (Alcaligenes bronchisepticus)).